We begin with the raw amino-acid sequence, 272 residues long: Undecaprenyl-diphosphatase (272 aa).

Transmembrane regions (helical) follow at residues 2–22, 43–63, 82–102, 110–130, 185–205, 224–244, and 252–272; these read FDII…FLPI, FISM…VLLY, WQLW…GLPL, LHTP…FIIL, YVAT…VLII, VLMT…KWLL, and FKPF…VMFI.

Belongs to the UppP family.

The protein localises to the cell membrane. The catalysed reaction is di-trans,octa-cis-undecaprenyl diphosphate + H2O = di-trans,octa-cis-undecaprenyl phosphate + phosphate + H(+). Functionally, catalyzes the dephosphorylation of undecaprenyl diphosphate (UPP). Confers resistance to bacitracin. In Lacticaseibacillus casei (strain BL23) (Lactobacillus casei), this protein is Undecaprenyl-diphosphatase.